A 214-amino-acid chain; its full sequence is Ras-like protein 2 (214 aa).

GTP is bound by residues 19–24 (GVGKSC), 35–41 (VDEYDPT), 65–66 (AG), 122–125 (NKCD), and 152–154 (SAK). The short motif at 38–46 (YDPTIEDSY) is the Effector region element. The segment at 178–197 (QGYSTGSGGSNAGGPSNKME) is disordered. At C211 the chain carries Cysteine methyl ester. C211 is lipidated: S-farnesyl cysteine. Positions 212-214 (VLM) are cleaved as a propeptide — removed in mature form.

The protein belongs to the small GTPase superfamily. Ras family. Interacts with farnesyltransferase beta subunit RAM1.

The protein resides in the cell membrane. Its activity is regulated as follows. Alternates between an inactive form bound to GDP and an active form bound to GTP. Activated by a guanine nucleotide-exchange factor (GEF) and inactivated by a GTPase-activating protein (GAP). Modulates the activity of the adenylate cyclase catalytic subunit and therefore affects the biosynthesis of cyclic-AMP. Plays a role in both surface attachment and surface recognition of appressoria, a highly specialized infection structure for plant penetration. Regulates appressorium formation by coordinated regulation of cAMP signaling and Pmk1 MAPK pathways. This is Ras-like protein 2 from Pyricularia oryzae (strain 70-15 / ATCC MYA-4617 / FGSC 8958) (Rice blast fungus).